A 120-amino-acid chain; its full sequence is Eukaryotic translation initiation factor 4E-binding protein 2 (120 aa).

A phosphothreonine; by MTOR mark is found at threonine 37 and threonine 46. The YXXXXLphi motif signature appears at 54–60 (YDRKFLL). Position 65 is a phosphoserine; by MTOR (serine 65). Threonine 70 carries the post-translational modification Phosphothreonine; by MTOR. Serine 83 carries the post-translational modification Phosphoserine. 2 positions are modified to deamidated asparagine: asparagine 99 and asparagine 102. The TOS motif signature appears at 116–120 (FEMDI).

It belongs to the eIF4E-binding protein family. In terms of assembly, hypophosphorylated EIF4EBP2 interacts with EIF4E; phosphorylation of EIF4EBP2 by mTORC1 causes dissociation of the complex allowing EIF4G1/EIF4G3 to bind and consequent initiation of translation. Interacts (via TOS motif) with RPTOR; promoting phosphorylation by mTORC1. Interacts with PCMT1; required to prevent isoaspartate accumulation and convert isoaspartate to Asp. In terms of processing, phosphorylation at Thr-37, Thr-46, Ser-65, Thr-70 and Ser-83 is mediated by MTOR and corresponds to the hyperphosphorylated form: it abolishes binding to EIF4E by inducing folding of intrinsically disordered regions. First phosphorylated at Thr-37 and Thr-46 by MTOR, inducing folding of region encompassing residues from Pro-18 to Arg-62 of into a four-stranded beta-domain that sequesters the helical YXXXXLPhi motif into a partly buried beta-strand, blocking accessibility to EIF4E. Protein phosphorylated at Thr-37 and Thr-46 is however unstable and subsequent phosphorylation at Ser-65, Thr-70 and Ser-83 is required to stabilize the fold, decreasing affinity for EIF4E by a factor of 4000. Phosphorylated in response to insulin, EGF and PDGF. Post-translationally, deamidated at Asn-99 and Asn-102 to aspartate (Asp) in brain. Deamidation promotes interaction with RPTOR, subsequent phosphorylation by mTORC1 and increased translation, leading to impair kinetics of excitatory synaptic transmission. Deamidation takes place during postnatal development, when the PI3K-Akt-mTOR signaling is reduced, suggesting it acts as a compensatory mechanism to promote translation despite attenuated PI3K-Akt-mTOR signaling in neuron development. Deamidation converts Asn residues into a mixture of Asp and isoaspartate; interactions with PCMT1 is required to prevent isoaspartate accumulation and convert isoaspartate to Asp. Enriched in brain.

The protein localises to the cytoplasm. It is found in the nucleus. Functionally, repressor of translation initiation involved in synaptic plasticity, learning and memory formation. Regulates EIF4E activity by preventing its assembly into the eIF4F complex: hypophosphorylated form of EIF4EBP2 competes with EIF4G1/EIF4G3 and strongly binds to EIF4E, leading to repress translation. In contrast, hyperphosphorylated form dissociates from EIF4E, allowing interaction between EIF4G1/EIF4G3 and EIF4E, leading to initiation of translation. EIF4EBP2 is enriched in brain and acts as a regulator of synapse activity and neuronal stem cell renewal via its ability to repress translation initiation. Mediates the regulation of protein translation by hormones, growth factors and other stimuli that signal through the MAP kinase and mTORC1 pathways. The protein is Eukaryotic translation initiation factor 4E-binding protein 2 of Mus musculus (Mouse).